Consider the following 540-residue polypeptide: T-complex protein 1 subunit theta (540 aa).

It belongs to the TCP-1 chaperonin family. In terms of assembly, heterooligomeric complex of about 850 to 900 kDa that forms two stacked rings, 12 to 16 nm in diameter.

It localises to the cytoplasm. In terms of biological role, molecular chaperone; assists the folding of proteins upon ATP hydrolysis. Known to play a role, in vitro, in the folding of actin and tubulin. In yeast may play a role in mitotic spindle formation. In Candida albicans (Yeast), this protein is T-complex protein 1 subunit theta (CCT8).